The primary structure comprises 338 residues: Ketol-acid reductoisomerase (NADP(+)) (338 aa).

Residues threonine 2–threonine 182 enclose the KARI N-terminal Rossmann domain. Residues tyrosine 25–glutamine 28, serine 51, serine 53, and aspartate 83–glutamine 86 each bind NADP(+). Residue histidine 108 is part of the active site. Glycine 134 contributes to the NADP(+) binding site. Positions threonine 183–asparagine 330 constitute a KARI C-terminal knotted domain. Residues aspartate 191, glutamate 195, glutamate 227, and glutamate 231 each contribute to the Mg(2+) site. Residue serine 252 coordinates substrate.

It belongs to the ketol-acid reductoisomerase family. Mg(2+) serves as cofactor.

It carries out the reaction (2R)-2,3-dihydroxy-3-methylbutanoate + NADP(+) = (2S)-2-acetolactate + NADPH + H(+). The enzyme catalyses (2R,3R)-2,3-dihydroxy-3-methylpentanoate + NADP(+) = (S)-2-ethyl-2-hydroxy-3-oxobutanoate + NADPH + H(+). The protein operates within amino-acid biosynthesis; L-isoleucine biosynthesis; L-isoleucine from 2-oxobutanoate: step 2/4. It participates in amino-acid biosynthesis; L-valine biosynthesis; L-valine from pyruvate: step 2/4. Involved in the biosynthesis of branched-chain amino acids (BCAA). Catalyzes an alkyl-migration followed by a ketol-acid reduction of (S)-2-acetolactate (S2AL) to yield (R)-2,3-dihydroxy-isovalerate. In the isomerase reaction, S2AL is rearranged via a Mg-dependent methyl migration to produce 3-hydroxy-3-methyl-2-ketobutyrate (HMKB). In the reductase reaction, this 2-ketoacid undergoes a metal-dependent reduction by NADPH to yield (R)-2,3-dihydroxy-isovalerate. This is Ketol-acid reductoisomerase (NADP(+)) from Clostridium botulinum (strain Alaska E43 / Type E3).